A 508-amino-acid polypeptide reads, in one-letter code: Protein FAM217A (508 aa).

It belongs to the FAM217 family.

This chain is Protein FAM217A (FAM217A), found in Homo sapiens (Human).